Consider the following 507-residue polypeptide: Cytochrome P450 monooxygenase helB2 (507 aa).

The signal sequence occupies residues 1–22 (MALPIILCLAVILWTSWRLLDA). Position 436 (Cys-436) interacts with heme.

Belongs to the cytochrome P450 family. Heme is required as a cofactor.

Its pathway is mycotoxin biosynthesis. Cytochrome P450 monooxygenase; part of the gene cluster that mediates the biosynthesis of helvolic acid, an antibacterial nortriterpenoid. Protostadienol synthase helA cyclizes (3S)-oxidosqualene to (17Z)-protosta-17(20),24-dien-3-beta-ol (protostadienol). The synthesis of protostadienol is followed by several steps of monooxygenation, dehydrogenation, and acyl transfer to yield the final helvolic acid. Following the cyclization to the tetracyclic protostadienol by helA, cytochrome P450 monooxygenases helB1-mediated and helB2-mediated oxidation at C-4 and C-16, acyltransferase helD2-dependent acetylation of 16-OH, oxidation of C-21 by cytochrome P450 monooxygenase helB4, and short chain dehydrogenase helC-dependent oxidative decarboxylation yield the fusidane skeleton. This intermediate is further modified in three additional steps mediated by the cytochrome P450 monooxygenase helB3, the acyltransferase helD1, and the 3-ketosteroid 1-dehydrogenase helE to give helvolic acid. Compared with the late stages in the biosynthesis of helvolic acid, enzymes involved in the early stage modifications act in a relatively strict order. The hydroxylation of C-16 by helB1 and subsequent acetylation by helD2 should occur before the helB3-mediated oxidation of C-21. C-4 demethylation in fusidane-type antibiotics proceeds in an unusual manner though it is also achieved by oxidative decarboxylation. The methyl group at C-4 beta position is oxidized by helB1 and subsequently removed by the short chain dehydrogenase helC. This chain is Cytochrome P450 monooxygenase helB2, found in Aspergillus fumigatus (strain ATCC MYA-4609 / CBS 101355 / FGSC A1100 / Af293) (Neosartorya fumigata).